Reading from the N-terminus, the 335-residue chain is uncharacterized protein (335 aa).

Positions 1-21 are cleaved as a signal peptide; the sequence is MDKKARAHTVIVCLVGALSLA. Cysteine 22 is lipidated: N-palmitoyl cysteine. Cysteine 22 carries the S-diacylglycerol cysteine lipid modification.

The protein resides in the cell membrane. This is an uncharacterized protein from Treponema pallidum (strain Nichols).